The primary structure comprises 273 residues: 3-((Z)-2-isocyanoethenyl)-1H-indole synthase (273 aa).

H105, D107, and H254 together coordinate Fe cation.

It belongs to the TfdA dioxygenase family. Fe(2+) serves as cofactor.

The enzyme catalyses (2S)-3-(1H-indol-3-yl)-2-isocyanopropanoate + 2-oxoglutarate + O2 + H(+) = 3-[(Z)-2-isocyanoethenyl]-1H-indole + succinate + 2 CO2 + H2O. In terms of biological role, involved in the biosynthesis of ambiguines, a family of hapalindole-type alkaloids. Responsible for the synthesis of Z-3-(2-isocyanoethen)-indole, a biosynthetic precursor to all ambiguines. The chain is 3-((Z)-2-isocyanoethenyl)-1H-indole synthase from Fischerella ambigua (strain UTEX 1903).